The chain runs to 272 residues: HMP-PP phosphatase (272 aa).

Aspartate 8 functions as the Nucleophile in the catalytic mechanism. Residues aspartate 8, aspartate 10, and aspartate 212 each coordinate Mg(2+).

It belongs to the HAD-like hydrolase superfamily. Cof family. Requires Mg(2+) as cofactor.

It catalyses the reaction 4-amino-2-methyl-5-(diphosphooxymethyl)pyrimidine + H2O = 4-amino-2-methyl-5-(phosphooxymethyl)pyrimidine + phosphate + H(+). Functionally, catalyzes the hydrolysis of 4-amino-2-methyl-5-hydroxymethylpyrimidine pyrophosphate (HMP-PP) to 4-amino-2-methyl-5-hydroxymethylpyrimidine phosphate (HMP-P). This is HMP-PP phosphatase from Escherichia coli (strain K12 / MC4100 / BW2952).